Reading from the N-terminus, the 112-residue chain is 87 kDa annexin-binding protein (112 aa).

As to quaternary structure, binds annexin.

This is 87 kDa annexin-binding protein from Physarum polycephalum (Slime mold).